We begin with the raw amino-acid sequence, 863 residues long: Receptor-like protein 9DC3 (863 aa).

The N-terminal stretch at 1-21 is a signal peptide; sequence MGCVKLVFFMLYVFLFQLVSS. Topologically, residues 22–812 are extracellular; that stretch reads SSLPHLCPED…EEDSPMISWQ (791 aa). The tract at residues 24-90 is N-cap; the sequence is LPHLCPEDQA…GVHCDETTGQ (67 aa). 2 N-linked (GlcNAc...) asparagine glycosylation sites follow: Asn-71 and Asn-108. The LRR 1; degenerate repeat unit spans residues 91 to 114; that stretch reads VIALDLRCSQLQGKFHSNSSLFQL. LRR repeat units follow at residues 115–138 and 140–163; these read SNLK…KFGE and SDLT…ISHL. An LRR 4; degenerate repeat occupies 164–190; sequence SKLHVLLIGDQYGLSIVPHNFEPLLKN. N-linked (GlcNAc...) asparagine glycans are attached at residues Asn-190, Asn-203, and Asn-211. 6 LRR repeats span residues 191–213, 214–237, 240–262, 264–286, 287–311, and 312–336; these read LTQL…SNFS, SHLT…VFHL, LEFL…KWNS, ASLM…SFSH, LTSL…LWNL, and TNIE…IFEK. A glycan (N-linked (GlcNAc...) asparagine) is linked at Asn-261. N-linked (GlcNAc...) asparagine glycosylation is found at Asn-299 and Asn-310. The stretch at 337 to 357 is one LRR 11; degenerate repeat; the sequence is LKKLSLFRNDNLDGGLEFLSF. LRR repeat units lie at residues 358-382, 383-406, 408-428, 429-452, 454-476, 477-500, 502-524, 525-549, 551-572, 573-597, 599-623, 667-690, 691-714, 715-739, and 741-759; these read NTQL…ISGL, QNLE…IFSL, SLVE…EFKS, KTLS…LLNQ, NLQL…ICNL, KTLI…VVER, EYLS…TFSV, GNIL…LINC, YLAL…WLGH, LSQL…GNTN, FTRL…ILGN, LDSN…IIGD, LVGL…SFQN, LSVL…LASL, and FLEV…IPKG. Residues Asn-378, Asn-396, and Asn-416 are each glycosylated (N-linked (GlcNAc...) asparagine). Asn-464 carries an N-linked (GlcNAc...) asparagine glycan. An N-linked (GlcNAc...) asparagine glycan is attached at Asn-519. Residue Asn-563 is glycosylated (N-linked (GlcNAc...) asparagine). N-linked (GlcNAc...) asparagine glycans are attached at residues Asn-674, Asn-698, and Asn-714. Asn-746 and Asn-767 each carry an N-linked (GlcNAc...) asparagine glycan. The interval 760 to 812 is C-cap/acidic domain; sequence KQFDSFGNTSYQGNDGLCGFPLSKLCGGDDQVTTPAELDQEEEEEDSPMISWQ. Residues 813–833 form a helical membrane-spanning segment; the sequence is GVLVGYGCGLVIGLSVIYIMW. The Cytoplasmic segment spans residues 834-863; that stretch reads STQYPAWFSRMHLKLEQIVTTRMKKHKKRY.

The protein belongs to the RLP family.

The protein localises to the cell membrane. Involved in plant defense. Confers resistance to the fungal pathogen C.fulvum through recognition of the AVR9 elicitor protein. The chain is Receptor-like protein 9DC3 from Solanum pimpinellifolium (Currant tomato).